The chain runs to 572 residues: Cytochrome P450 monooxygenase xilC (572 aa).

C515 is a heme binding site.

The protein belongs to the cytochrome P450 family. Requires heme as cofactor.

It functions in the pathway secondary metabolite biosynthesis. Cytochrome P450 monooxygenase; part of the gene cluster that mediates the biosynthesis of the 6-methyl-2-pyrone derivative xylariolide D. XilC hydroxylates the 5-alkyl-6-methyl-2-pyrone backbone called prexylariolide D, produced by the highly reducing polyketide synthase xilA, on its side chain to form xylariolide D. This Penicillium crustosum (Blue mold fungus) protein is Cytochrome P450 monooxygenase xilC.